The sequence spans 70 residues: DNA-directed RNA polymerases I, II, and III subunit rpabc5 (70 aa).

The Zn(2+) site is built by Cys7, Cys10, Cys44, and Cys45.

The protein belongs to the archaeal Rpo10/eukaryotic RPB10 RNA polymerase subunit family. As to quaternary structure, component of the RNA polymerase I (Pol I), RNA polymerase II (Pol II) and RNA polymerase III (Pol III) complexes.

It localises to the nucleus. Its function is as follows. DNA-dependent RNA polymerase catalyzes the transcription of DNA into RNA using the four ribonucleoside triphosphates as substrates. Common component of RNA polymerases I, II and III which synthesize ribosomal RNA precursors, mRNA precursors and many functional non-coding RNAs, and a small RNAs, such as 5S rRNA and tRNAs, respectively. Pol II is the central component of the basal RNA polymerase II transcription machinery. Pols are composed of mobile elements that move relative to each other. In Pol II, RBP10 is part of the core element with the central large cleft. The chain is DNA-directed RNA polymerases I, II, and III subunit rpabc5 (polr2l) from Dictyostelium discoideum (Social amoeba).